The chain runs to 115 residues: Large ribosomal subunit protein bL19 (115 aa).

This sequence belongs to the bacterial ribosomal protein bL19 family.

Its function is as follows. This protein is located at the 30S-50S ribosomal subunit interface and may play a role in the structure and function of the aminoacyl-tRNA binding site. The sequence is that of Large ribosomal subunit protein bL19 from Baumannia cicadellinicola subsp. Homalodisca coagulata.